Consider the following 608-residue polypeptide: Elongation factor 4 (608 aa).

Residues 11 to 193 (SKIRNFSIIA…QIVEKVPAPD (183 aa)) form the tr-type G domain. GTP contacts are provided by residues 23-28 (DHGKST) and 140-143 (NKID).

This sequence belongs to the TRAFAC class translation factor GTPase superfamily. Classic translation factor GTPase family. LepA subfamily.

It is found in the cell membrane. It carries out the reaction GTP + H2O = GDP + phosphate + H(+). Its function is as follows. Required for accurate and efficient protein synthesis under certain stress conditions. May act as a fidelity factor of the translation reaction, by catalyzing a one-codon backward translocation of tRNAs on improperly translocated ribosomes. Back-translocation proceeds from a post-translocation (POST) complex to a pre-translocation (PRE) complex, thus giving elongation factor G a second chance to translocate the tRNAs correctly. Binds to ribosomes in a GTP-dependent manner. This is Elongation factor 4 from Bacillus cytotoxicus (strain DSM 22905 / CIP 110041 / 391-98 / NVH 391-98).